A 103-amino-acid polypeptide reads, in one-letter code: Large ribosomal subunit protein bL21 (103 aa).

Belongs to the bacterial ribosomal protein bL21 family. Part of the 50S ribosomal subunit. Contacts protein L20.

In terms of biological role, this protein binds to 23S rRNA in the presence of protein L20. The sequence is that of Large ribosomal subunit protein bL21 from Pectobacterium carotovorum subsp. carotovorum (strain PC1).